The following is a 251-amino-acid chain: Triosephosphate isomerase (251 aa).

Position 9 to 11 (9 to 11 (NWK)) interacts with substrate. Histidine 95 (electrophile) is an active-site residue. Glutamate 167 acts as the Proton acceptor in catalysis. Substrate-binding positions include glycine 173, serine 212, and 233 to 234 (GG).

This sequence belongs to the triosephosphate isomerase family. Homodimer.

The protein resides in the cytoplasm. It carries out the reaction D-glyceraldehyde 3-phosphate = dihydroxyacetone phosphate. It functions in the pathway carbohydrate biosynthesis; gluconeogenesis. Its pathway is carbohydrate degradation; glycolysis; D-glyceraldehyde 3-phosphate from glycerone phosphate: step 1/1. Involved in the gluconeogenesis. Catalyzes stereospecifically the conversion of dihydroxyacetone phosphate (DHAP) to D-glyceraldehyde-3-phosphate (G3P). This chain is Triosephosphate isomerase, found in Pseudomonas fluorescens (strain Pf0-1).